A 340-amino-acid polypeptide reads, in one-letter code: GTP 3',8-cyclase (340 aa).

Positions lysine 8–aspartate 227 constitute a Radical SAM core domain. Position 17 (arginine 17) interacts with GTP. Positions 24 and 28 each coordinate [4Fe-4S] cluster. Residue tyrosine 30 coordinates S-adenosyl-L-methionine. Cysteine 31 contacts [4Fe-4S] cluster. Arginine 71 is a GTP binding site. Glycine 75 lines the S-adenosyl-L-methionine pocket. Residue threonine 102 coordinates GTP. Residue serine 126 coordinates S-adenosyl-L-methionine. Residue lysine 163 coordinates GTP. Methionine 197 provides a ligand contact to S-adenosyl-L-methionine. Positions 261 and 264 each coordinate [4Fe-4S] cluster. Arginine 266–arginine 268 contributes to the GTP binding site. Residue cysteine 278 coordinates [4Fe-4S] cluster.

It belongs to the radical SAM superfamily. MoaA family. As to quaternary structure, monomer and homodimer. It depends on [4Fe-4S] cluster as a cofactor.

It carries out the reaction GTP + AH2 + S-adenosyl-L-methionine = (8S)-3',8-cyclo-7,8-dihydroguanosine 5'-triphosphate + 5'-deoxyadenosine + L-methionine + A + H(+). It functions in the pathway cofactor biosynthesis; molybdopterin biosynthesis. Functionally, catalyzes the cyclization of GTP to (8S)-3',8-cyclo-7,8-dihydroguanosine 5'-triphosphate. The chain is GTP 3',8-cyclase from Staphylococcus aureus (strain MRSA252).